The sequence spans 657 residues: DNA-directed RNA polymerase III subunit RPC3 (657 aa).

Residues 390-450 (HSNQSLKRKQ…LDLDEDDSDP (61 aa)) form a disordered region. Positions 428-448 (EESEEENEEGDANLDLDEDDS) are enriched in acidic residues. The segment at 584-605 (LTWNLARLISKLETLKEENATL) is leucine-zipper.

It belongs to the RNA polymerase beta chain family. Component of the RNA polymerase III (Pol III) complex consisting of 17 subunits.

Its subcellular location is the nucleus. Functionally, DNA-dependent RNA polymerase catalyzes the transcription of DNA into RNA using the four ribonucleoside triphosphates as substrates. Specific core component of RNA polymerase III which synthesizes small RNAs, such as 5S rRNA and tRNAs. The protein is DNA-directed RNA polymerase III subunit RPC3 (RPC82) of Kluyveromyces lactis (strain ATCC 8585 / CBS 2359 / DSM 70799 / NBRC 1267 / NRRL Y-1140 / WM37) (Yeast).